Here is a 759-residue protein sequence, read N- to C-terminus: 5-methyltetrahydropteroyltriglutamate--homocysteine methyltransferase (759 aa).

Over residues 1–16 (MTQPVRRQPFTATITG) the composition is skewed to polar residues. The tract at residues 1–22 (MTQPVRRQPFTATITGSPRIGP) is disordered. 5-methyltetrahydropteroyltri-L-glutamate-binding positions include 24–27 (RELK) and lysine 118. L-homocysteine contacts are provided by residues 437–439 (IGS) and glutamate 490. L-methionine is bound by residues 437–439 (IGS) and glutamate 490. Residues 521 to 522 (RC) and tryptophan 567 each bind 5-methyltetrahydropteroyltri-L-glutamate. Aspartate 605 lines the L-homocysteine pocket. Aspartate 605 is a binding site for L-methionine. A 5-methyltetrahydropteroyltri-L-glutamate-binding site is contributed by glutamate 611. Zn(2+) is bound by residues histidine 647, cysteine 649, and glutamate 671. Histidine 700 (proton donor) is an active-site residue. Residue cysteine 732 participates in Zn(2+) binding.

It belongs to the vitamin-B12 independent methionine synthase family. The cofactor is Zn(2+).

The catalysed reaction is 5-methyltetrahydropteroyltri-L-glutamate + L-homocysteine = tetrahydropteroyltri-L-glutamate + L-methionine. The protein operates within amino-acid biosynthesis; L-methionine biosynthesis via de novo pathway; L-methionine from L-homocysteine (MetE route): step 1/1. Its function is as follows. Catalyzes the transfer of a methyl group from 5-methyltetrahydrofolate to homocysteine resulting in methionine formation. The sequence is that of 5-methyltetrahydropteroyltriglutamate--homocysteine methyltransferase from Mycobacterium tuberculosis (strain ATCC 25177 / H37Ra).